The following is a 590-amino-acid chain: Glutamine--fructose-6-phosphate aminotransferase [isomerizing] (590 aa).

C2 (nucleophile; for GATase activity) is an active-site residue. Positions 2-221 (CGIIGIVSSK…DGELGFITTS (220 aa)) constitute a Glutamine amidotransferase type-2 domain. SIS domains lie at 286–422 (IIAE…DNTN) and 445–580 (IGEE…PDKP). The active-site For Fru-6P isomerization activity is the K585.

As to quaternary structure, homodimer.

It is found in the cytoplasm. It carries out the reaction D-fructose 6-phosphate + L-glutamine = D-glucosamine 6-phosphate + L-glutamate. Functionally, catalyzes the first step in hexosamine metabolism, converting fructose-6P into glucosamine-6P using glutamine as a nitrogen source. The polypeptide is Glutamine--fructose-6-phosphate aminotransferase [isomerizing] (Sulfolobus acidocaldarius (strain ATCC 33909 / DSM 639 / JCM 8929 / NBRC 15157 / NCIMB 11770)).